Consider the following 274-residue polypeptide: NH(3)-dependent NAD(+) synthetase (274 aa).

46–53 contributes to the ATP binding site; the sequence is GISGGQDS. A Mg(2+)-binding site is contributed by D52. Residue R140 participates in deamido-NAD(+) binding. ATP is bound at residue T160. Position 165 (E165) interacts with Mg(2+). Residues K173 and D180 each contribute to the deamido-NAD(+) site. ATP contacts are provided by K189 and T211. 260-261 lines the deamido-NAD(+) pocket; the sequence is HK.

Belongs to the NAD synthetase family. As to quaternary structure, homodimer.

The enzyme catalyses deamido-NAD(+) + NH4(+) + ATP = AMP + diphosphate + NAD(+) + H(+). The protein operates within cofactor biosynthesis; NAD(+) biosynthesis; NAD(+) from deamido-NAD(+) (ammonia route): step 1/1. Catalyzes the ATP-dependent amidation of deamido-NAD to form NAD. Uses ammonia as a nitrogen source. This chain is NH(3)-dependent NAD(+) synthetase, found in Streptococcus equi subsp. zooepidemicus (strain MGCS10565).